The following is a 397-amino-acid chain: Cytochrome b (397 aa).

The next 4 helical transmembrane spans lie at 48-68 (FGSM…LLSA), 92-113 (WMLR…YAHI), 128-148 (WYFG…GYTL), and 193-213 (FYTL…LHLF). Heme b is bound by residues H98 and H112. H197 and H211 together coordinate heme b. H216 contacts a ubiquinone. 4 helical membrane-spanning segments follow: residues 241 to 261 (IKDL…VCVD), 303 to 323 (AGGV…PTLH), 335 to 355 (LNQV…WIGA), and 362 to 382 (YIIL…WTPF).

It belongs to the cytochrome b family. In terms of assembly, the main subunits of complex b-c1 are: cytochrome b, cytochrome c1 and the Rieske protein. Heme b is required as a cofactor.

Its subcellular location is the mitochondrion inner membrane. Its function is as follows. Component of the ubiquinol-cytochrome c reductase complex (complex III or cytochrome b-c1 complex) that is part of the mitochondrial respiratory chain. The b-c1 complex mediates electron transfer from ubiquinol to cytochrome c. Contributes to the generation of a proton gradient across the mitochondrial membrane that is then used for ATP synthesis. This chain is Cytochrome b (MT-CYB), found in Mytilus edulis (Blue mussel).